The chain runs to 223 residues: ATP phosphoribosyltransferase (223 aa).

It belongs to the ATP phosphoribosyltransferase family. Short subfamily. In terms of assembly, heteromultimer composed of HisG and HisZ subunits.

Its subcellular location is the cytoplasm. The catalysed reaction is 1-(5-phospho-beta-D-ribosyl)-ATP + diphosphate = 5-phospho-alpha-D-ribose 1-diphosphate + ATP. It functions in the pathway amino-acid biosynthesis; L-histidine biosynthesis; L-histidine from 5-phospho-alpha-D-ribose 1-diphosphate: step 1/9. In terms of biological role, catalyzes the condensation of ATP and 5-phosphoribose 1-diphosphate to form N'-(5'-phosphoribosyl)-ATP (PR-ATP). Has a crucial role in the pathway because the rate of histidine biosynthesis seems to be controlled primarily by regulation of HisG enzymatic activity. This is ATP phosphoribosyltransferase from Desulfitobacterium hafniense (strain Y51).